The sequence spans 267 residues: MASVTEHAQWGVGCLPPLNVDKQAIAAAFSRAAESYDSAANLQRETGHRLVQLGQQHTGFVVLDAGCGTGHFSQHWRLLGKRVIALDLAAGMLDYARQQQVADDYLLGDIEHIPLPDQSVDICFSNLAVQWCSDLGAALSEFYRVTRPGGIILFSTLAEGSLDELGQAWQQVDGQRHVNDFLPLQHIQTACQYYRHHLTTALYQPRFPNVIALMRSLQGIGATHLHHGRQAGLQGRQRLAALQRAYVMQSGGYPLSYHMVYGVIYRD.

Belongs to the methyltransferase superfamily.

It carries out the reaction malonyl-[ACP] + S-adenosyl-L-methionine = malonyl-[ACP] methyl ester + S-adenosyl-L-homocysteine. It participates in cofactor biosynthesis; biotin biosynthesis. In terms of biological role, converts the free carboxyl group of a malonyl-thioester to its methyl ester by transfer of a methyl group from S-adenosyl-L-methionine (SAM). It allows to synthesize pimeloyl-ACP via the fatty acid synthetic pathway. In Yersinia pestis, this protein is Malonyl-[acyl-carrier protein] O-methyltransferase.